The following is a 355-amino-acid chain: Inositol-tetrakisphosphate 1-kinase 4 (355 aa).

K65 serves as a coordination point for 1D-myo-inositol 1,3,4-trisphosphate. The ATP site is built by R101 and K146. The ATP-grasp domain occupies 107 to 318; that stretch reads VVSGLRTPVS…FFLEMLRGTR (212 aa). Positions 157 and 190 each coordinate 1D-myo-inositol 1,3,4-trisphosphate. Residues 179–190 and S205 contribute to the ATP site; that span reads QEFVNHGGVLFK. The interval 225–248 is disordered; that stretch reads FANISNQPLPPPDDDGGAADDDTP. Residues 236–247 are compositionally biased toward acidic residues; it reads PDDDGGAADDDT. 3 residues coordinate Mg(2+): D272, D289, and N291. A 1D-myo-inositol 1,3,4-trisphosphate-binding site is contributed by N291.

The protein belongs to the ITPK1 family. In terms of assembly, monomer. It depends on Mg(2+) as a cofactor.

The catalysed reaction is 1D-myo-inositol 3,4,5,6-tetrakisphosphate + ATP = 1D-myo-inositol 1,3,4,5,6-pentakisphosphate + ADP + H(+). It catalyses the reaction 1D-myo-inositol 1,3,4-trisphosphate + ATP = 1D-myo-inositol 1,3,4,5-tetrakisphosphate + ADP + H(+). The enzyme catalyses 1D-myo-inositol 1,3,4-trisphosphate + ATP = 1D-myo-inositol 1,3,4,6-tetrakisphosphate + ADP + H(+). Functionally, kinase that can phosphorylate various inositol polyphosphate such as Ins(3,4,5,6)P4 or Ins(1,3,4)P3 and participates in phytic acid biosynthesis in developing seeds. Phytic acid is the primary storage form of phosphorus in cereal grains and other plant seeds. The protein is Inositol-tetrakisphosphate 1-kinase 4 (ITPK4) of Oryza sativa subsp. indica (Rice).